The chain runs to 98 residues: Large ribosomal subunit protein bL27 (98 aa).

Positions 1–9 (MLKMNLQLF) are excised as a propeptide.

Belongs to the bacterial ribosomal protein bL27 family. Post-translationally, the N-terminus is cleaved by ribosomal processing cysteine protease Prp.

The sequence is that of Large ribosomal subunit protein bL27 from Desulfitobacterium hafniense (strain DSM 10664 / DCB-2).